The primary structure comprises 397 residues: Putative F-box protein At2g04810 (397 aa).

Residues 20–68 (SDWSKLCPDVLRKIYETLRSPVDSHRAKIVCSNWYSVWKTCVKRPLCPL) enclose the F-box domain.

The polypeptide is Putative F-box protein At2g04810 (Arabidopsis thaliana (Mouse-ear cress)).